Reading from the N-terminus, the 368-residue chain is Leu/Ile/Val-binding protein homolog 3 (368 aa).

An N-terminal signal peptide occupies residues 1–23 (MNLKLLSSVAFAATIGFASAAYA).

The protein belongs to the leucine-binding protein family.

Functionally, component of an amino-acid transport system. This chain is Leu/Ile/Val-binding protein homolog 3, found in Brucella melitensis biotype 1 (strain ATCC 23456 / CCUG 17765 / NCTC 10094 / 16M).